Consider the following 243-residue polypeptide: Biosynthetic peptidoglycan transglycosylase (243 aa).

Residues 22-42 (LIVLLVLALMSVLQVIVFRFV) traverse the membrane as a helical segment.

It belongs to the glycosyltransferase 51 family.

It localises to the cell inner membrane. The enzyme catalyses [GlcNAc-(1-&gt;4)-Mur2Ac(oyl-L-Ala-gamma-D-Glu-L-Lys-D-Ala-D-Ala)](n)-di-trans,octa-cis-undecaprenyl diphosphate + beta-D-GlcNAc-(1-&gt;4)-Mur2Ac(oyl-L-Ala-gamma-D-Glu-L-Lys-D-Ala-D-Ala)-di-trans,octa-cis-undecaprenyl diphosphate = [GlcNAc-(1-&gt;4)-Mur2Ac(oyl-L-Ala-gamma-D-Glu-L-Lys-D-Ala-D-Ala)](n+1)-di-trans,octa-cis-undecaprenyl diphosphate + di-trans,octa-cis-undecaprenyl diphosphate + H(+). The protein operates within cell wall biogenesis; peptidoglycan biosynthesis. Functionally, peptidoglycan polymerase that catalyzes glycan chain elongation from lipid-linked precursors. The sequence is that of Biosynthetic peptidoglycan transglycosylase from Xylella fastidiosa (strain 9a5c).